Consider the following 965-residue polypeptide: Meiosis-specific coiled-coil domain-containing protein MEIOC (965 aa).

Disordered stretches follow at residues 1–22 (MEVS…EGPE) and 946–965 (VHES…TSKH). Residues 949-965 (SINSSNPMNQRGETSKH) are compositionally biased toward polar residues.

As to quaternary structure, interacts with YTHDC2; binds transcripts that regulate the mitotic cell cycle inhibiting progression into metaphase, thereby allowing meiotic prophase to proceed normally. Interacts with RBM46. Expressed specifically in fetal ovary and postnatal and adult testes (at protein level). In adult testis expressed in spermatocytes, beginning in preleptotene and extending through most stages of meiotic prophase I, including leptotene, zygotene, and pachytene.

It is found in the cytoplasm. It localises to the nucleus. In terms of biological role, is required for meiosis completion in both male and female germ cells. Confers stability to numerous meiotic mRNAs in gonads allowing proper initiation and progression into meiosis prophase I. The function may involve YTHDC2 and is independent of induction by retinoic acid (RA). Maintains an extended meiotic prophase I by properly promoting the transition from a mitotic to a meiotic cell cycle program by binding transcripts through its interaction with YTHDC2 that regulate the mitotic cell cycle. The polypeptide is Meiosis-specific coiled-coil domain-containing protein MEIOC (Mus musculus (Mouse)).